Consider the following 978-residue polypeptide: LRR receptor-like serine/threonine-protein kinase ER1 (978 aa).

The N-terminal stretch at 1–24 is a signal peptide; that stretch reads MTPAPAAASYRALVALLLVAVAVA. The Extracellular segment spans residues 25 to 577; sequence DDGSTLLEIK…GHQQKPLISK (553 aa). 2 N-linked (GlcNAc...) asparagine glycosylation sites follow: asparagine 62 and asparagine 71. LRR repeat units lie at residues 66 to 87, 88 to 112, 114 to 136, 137 to 159, 160 to 184, 186 to 208, 209 to 232, 233 to 257, 259 to 278, 279 to 302, 304 to 327, 328 to 350, 352 to 375, 377 to 399, 400 to 423, 424 to 447, 449 to 470, 471 to 494, 496 to 518, and 519 to 543; these read AVAA…AVGR, LKGI…IGDC, SLKT…VSKL, KHIE…TLSQ, LPNL…IYWN, VLQY…ICQL, TGLW…IGNC, TSFQ…GFLQ, ATLS…VIGL, MQAL…ILGN, TYTE…LGNM, STLH…EFGK, TGLF…ISSC, NLNS…LHKL, ESMT…LSRI, NNLD…IGSL, HLLR…EIGN, LRSI…ELGM, QNLM…LMNC, and FSLN…NFSR. N-linked (GlcNAc...) asparagine glycosylation is found at asparagine 218 and asparagine 231. N-linked (GlcNAc...) asparagine glycans are attached at residues asparagine 302 and asparagine 326. N-linked (GlcNAc...) asparagine glycosylation is found at asparagine 371, asparagine 389, and asparagine 406. Residue asparagine 454 is glycosylated (N-linked (GlcNAc...) asparagine). N-linked (GlcNAc...) asparagine glycans are attached at residues asparagine 507, asparagine 525, and asparagine 540. A helical membrane pass occupies residues 578-598; it reads AAILGIAVGGLVILLMILVAV. Topologically, residues 599-978 are cytoplasmic; sequence CRPHSPPVFK…FGEVISQNTE (380 aa). The Protein kinase domain occupies 645-916; sequence LSEKYIIGYG…EVVRVLDCLV (272 aa). Residues 651–659 and lysine 673 contribute to the ATP site; that span reads IGYGASSTV. Aspartate 771 acts as the Proton acceptor in catalysis.

This sequence belongs to the protein kinase superfamily. Ser/Thr protein kinase family.

It localises to the cell membrane. The catalysed reaction is L-seryl-[protein] + ATP = O-phospho-L-seryl-[protein] + ADP + H(+). It carries out the reaction L-threonyl-[protein] + ATP = O-phospho-L-threonyl-[protein] + ADP + H(+). Receptor kinase involved in the regulation of thermotolerance. Functions as a positive regulator of heat tolerance. May be involved in the regulation of cell proliferation and cell growth. This Oryza sativa subsp. japonica (Rice) protein is LRR receptor-like serine/threonine-protein kinase ER1.